Here is a 274-residue protein sequence, read N- to C-terminus: Serine acetyltransferase (274 aa).

Belongs to the transferase hexapeptide repeat family.

It localises to the cytoplasm. The enzyme catalyses L-serine + acetyl-CoA = O-acetyl-L-serine + CoA. Its pathway is amino-acid biosynthesis; L-cysteine biosynthesis; L-cysteine from L-serine: step 1/2. The sequence is that of Serine acetyltransferase (cysE) from Buchnera aphidicola subsp. Acyrthosiphon pisum (strain APS) (Acyrthosiphon pisum symbiotic bacterium).